The chain runs to 505 residues: MSERKVRVRFAPSPTGALHIGGVRTALYNYLFARQHGGDLIFRIEDTDSNRFVPGAEEYIIESFKWLGINFDEGVSFGGNYGPYRQSERRDIYKKYVQVLLDSGKAYIAFDTPAELDAKRQEISNFQYDASTRMSMRNSLTLPKEEVDALIADGKQYVVRFKIEPNEDVHVHDIIRGEVVINSSILDDKVLYKSADELPTYHLANIVDDHLMEVSHVIRGEEWLPSAPLHVLLYRAFGWADTMPEFAHLPLLLKPDGNGKLSKRDGDRLGFPVFPLEWHDPKTGEVSSGYRESGYLPEAVINFLALLGWNPGNDQELMSLDELVKLFDLHRCSKAGAKFDFEKGKWFNHEYILKKSNEEVAGLFMPILKEHGIEAPMDKVVTVVGLMKDRVSFIKDLWETCKFFFVAPTEYDEKTRKKRWKEDSPERMLELADVLEALDDFSLENQEAVVMKWIEDKGYHLGNIMNAFRLTLVGEGKGPHMFDISAVLGKEETLRRIRRAVEVLK.

A 'HIGH' region motif is present at residues 12–22 (PSPTGALHIGG). The 'KMSKS' region signature appears at 260-264 (KLSKR). Lys263 lines the ATP pocket.

The protein belongs to the class-I aminoacyl-tRNA synthetase family. Glutamate--tRNA ligase type 1 subfamily. In terms of assembly, monomer.

The protein resides in the cytoplasm. It carries out the reaction tRNA(Glu) + L-glutamate + ATP = L-glutamyl-tRNA(Glu) + AMP + diphosphate. In terms of biological role, catalyzes the attachment of glutamate to tRNA(Glu) in a two-step reaction: glutamate is first activated by ATP to form Glu-AMP and then transferred to the acceptor end of tRNA(Glu). This is Glutamate--tRNA ligase from Phocaeicola vulgatus (strain ATCC 8482 / DSM 1447 / JCM 5826 / CCUG 4940 / NBRC 14291 / NCTC 11154) (Bacteroides vulgatus).